A 488-amino-acid polypeptide reads, in one-letter code: GTPase Der (488 aa).

In terms of domain architecture, EngA-type G 1 spans 3 to 166 (PVVALVGRPN…YALAPYAEAL (164 aa)). GTP contacts are provided by residues 9–16 (GRPNVGKS), 56–60 (DTGGI), and 118–121 (NKVD). A disordered region spans residues 168–191 (LNRDGDEDEDEEEREYSEEEAEAE). A compositionally biased stretch (acidic residues) spans 172–189 (GDEDEDEEEREYSEEEAE). The EngA-type G 2 domain occupies 200–373 (IKMAIIGKPN…SVQEAYDSAT (174 aa)). Residues 206–213 (GKPNVGKS), 253–257 (DTAGV), and 318–321 (NKWD) each bind GTP. The 85-residue stretch at 374–458 (RRVSTSMLTR…PIQIRFQDSA (85 aa)) folds into the KH-like domain.

Belongs to the TRAFAC class TrmE-Era-EngA-EngB-Septin-like GTPase superfamily. EngA (Der) GTPase family. Associates with the 50S ribosomal subunit.

Its function is as follows. GTPase that plays an essential role in the late steps of ribosome biogenesis. This Shewanella sediminis (strain HAW-EB3) protein is GTPase Der.